The chain runs to 358 residues: Aromatic amino acid aminotransferase (358 aa).

K214 bears the N6-(pyridoxal phosphate)lysine mark.

Belongs to the class-II pyridoxal-phosphate-dependent aminotransferase family. Homodimer. Requires pyridoxal 5'-phosphate as cofactor.

The enzyme catalyses an aromatic L-alpha-amino acid + 2-oxoglutarate = an aromatic oxo-acid + L-glutamate. Functionally, aminotransferase that catalyzes the conversion of aromatic amino acids and 2-oxoglutarate into corresponding aromatic oxo acids and L-glutamate. The protein is Aromatic amino acid aminotransferase of Rhodococcus erythropolis (strain PR4 / NBRC 100887).